The chain runs to 141 residues: MEQTLSIIKPDSVGKAHIGEIIAIFEKSGLRIAAMKMVHLSVKEAEGFYVVHKERPFFQELVDFMISGPVVVMVLQGENAVARNRELMGATNPKEAAEGSIRALFGESIGVNAVHGSDSLENAAIEVSYFFAKTEIVNSVA.

ATP-binding residues include Lys9, Phe57, Arg85, Thr91, Arg102, and Asn112. The Pros-phosphohistidine intermediate role is filled by His115.

This sequence belongs to the NDK family. Homotetramer. Mg(2+) serves as cofactor.

It is found in the cytoplasm. The enzyme catalyses a 2'-deoxyribonucleoside 5'-diphosphate + ATP = a 2'-deoxyribonucleoside 5'-triphosphate + ADP. It carries out the reaction a ribonucleoside 5'-diphosphate + ATP = a ribonucleoside 5'-triphosphate + ADP. Functionally, major role in the synthesis of nucleoside triphosphates other than ATP. The ATP gamma phosphate is transferred to the NDP beta phosphate via a ping-pong mechanism, using a phosphorylated active-site intermediate. This chain is Nucleoside diphosphate kinase, found in Chlamydia trachomatis serovar A (strain ATCC VR-571B / DSM 19440 / HAR-13).